A 248-amino-acid polypeptide reads, in one-letter code: UDP-2,3-diacylglucosamine hydrolase (248 aa).

Mn(2+) contacts are provided by Asp7, His9, Asp40, Asn78, and His113. Position 78-79 (78-79 (NR)) interacts with substrate. Substrate-binding residues include Asp121, Ser159, Thr163, Lys166, and His194. Mn(2+)-binding residues include His194 and His196.

Belongs to the LpxH family. Mn(2+) is required as a cofactor.

Its subcellular location is the cell inner membrane. It catalyses the reaction UDP-2-N,3-O-bis[(3R)-3-hydroxytetradecanoyl]-alpha-D-glucosamine + H2O = 2-N,3-O-bis[(3R)-3-hydroxytetradecanoyl]-alpha-D-glucosaminyl 1-phosphate + UMP + 2 H(+). The protein operates within glycolipid biosynthesis; lipid IV(A) biosynthesis; lipid IV(A) from (3R)-3-hydroxytetradecanoyl-[acyl-carrier-protein] and UDP-N-acetyl-alpha-D-glucosamine: step 4/6. Hydrolyzes the pyrophosphate bond of UDP-2,3-diacylglucosamine to yield 2,3-diacylglucosamine 1-phosphate (lipid X) and UMP by catalyzing the attack of water at the alpha-P atom. Involved in the biosynthesis of lipid A, a phosphorylated glycolipid that anchors the lipopolysaccharide to the outer membrane of the cell. This Pseudomonas syringae pv. tomato (strain ATCC BAA-871 / DC3000) protein is UDP-2,3-diacylglucosamine hydrolase.